Consider the following 59-residue polypeptide: uncharacterized protein (59 aa).

It is found in the mitochondrion. This is an uncharacterized protein from Ascobolus immersus.